We begin with the raw amino-acid sequence, 514 residues long: piRNA biogenesis protein EXD1 (514 aa).

Residues 30–122 (LHAERTWMEK…HGKLCWLQVA (93 aa)) enclose the 3'-5' exonuclease domain. The interval 384–422 (SLNKQATNPQHLPPTEEGETSEDSSNKLICTKSKGSEDQ) is disordered.

It belongs to the EXD1 family. Homodimer. Component of the PET complex, at least composed of EXD1, PIWIL2, TDRD12 and piRNAs.

The protein resides in the cytoplasm. In terms of biological role, RNA-binding component of the PET complex, a multiprotein complex required for the processing of piRNAs during spermatogenesis. The piRNA metabolic process mediates the repression of transposable elements during meiosis by forming complexes composed of piRNAs and Piwi proteins and governs the methylation and subsequent repression of transposable elements, preventing their mobilization, which is essential for the germline integrity. The PET complex is required during the secondary piRNAs metabolic process for the PIWIL2 slicing-triggered loading of PIWIL4 piRNAs. In the PET complex, EXD1 probably acts as an RNA adapter. EXD1 is an inactive exonuclease. In Homo sapiens (Human), this protein is piRNA biogenesis protein EXD1 (EXD1).